The chain runs to 421 residues: Testin (421 aa).

A PET domain is found at 92 to 199 (MILTNPVAAK…GDVKLPCEMD (108 aa)). The tract at residues 133 to 164 (EKQPVAGSEGAQYRKKQLAKQLPAHDQDPSKC) is disordered. Over residues 155–164 (PAHDQDPSKC) the composition is skewed to basic and acidic residues. LIM zinc-binding domains are found at residues 234–297 (YSCY…CDSE), 299–359 (PRCA…NHAV), and 362–421 (QGCH…KMMS).

The protein belongs to the prickle / espinas / testin family. Interacts via LIM domain 1 with ZYX. Interacts (via LIM domain 3) with ENAH and VASP. Interacts with ALKBH4, talin, actin, alpha-actinin, GRIP1 and PXN. Interacts (via LIM domain 2) with ACTL7A (via N-terminus). Heterodimer with ACTL7A; the heterodimer interacts with ENAH to form a heterotrimer.

The protein localises to the cytoplasm. The protein resides in the cell junction. It is found in the focal adhesion. Its function is as follows. Scaffold protein that may play a role in cell adhesion, cell spreading and in the reorganization of the actin cytoskeleton. Plays a role in the regulation of cell proliferation. May act as a tumor suppressor. The polypeptide is Testin (TES) (Aotus nancymaae (Ma's night monkey)).